The chain runs to 403 residues: Phosphoglycerate kinase (403 aa).

Substrate-binding positions include 24-26, Arg-39, 62-65, Arg-121, and Arg-161; these read DLN and HLGR. ATP contacts are provided by residues Lys-211, Gly-299, Glu-330, and 359-362; that span reads GGDS.

This sequence belongs to the phosphoglycerate kinase family. In terms of assembly, monomer.

The protein resides in the cytoplasm. The enzyme catalyses (2R)-3-phosphoglycerate + ATP = (2R)-3-phospho-glyceroyl phosphate + ADP. Its pathway is carbohydrate degradation; glycolysis; pyruvate from D-glyceraldehyde 3-phosphate: step 2/5. The sequence is that of Phosphoglycerate kinase from Corynebacterium jeikeium (strain K411).